We begin with the raw amino-acid sequence, 73 residues long: Long neurotoxin 1 (73 aa).

Cystine bridges form between C3/C21, C14/C42, C27/C31, C46/C57, and C58/C63.

This sequence belongs to the three-finger toxin family. Long-chain subfamily. Type II alpha-neurotoxin sub-subfamily. As to expression, expressed by the venom gland.

It localises to the secreted. Functionally, binds with high affinity to muscular (alpha-1/CHRNA1) and neuronal (alpha-7/CHRNA7) nicotinic acetylcholine receptor (nAChR) and inhibits acetylcholine from binding to the receptor, thereby impairing neuromuscular and neuronal transmission. The protein is Long neurotoxin 1 of Ophiophagus hannah (King cobra).